Here is a 97-residue protein sequence, read N- to C-terminus: Osteocalcin (97 aa).

An N-terminal signal peptide occupies residues methionine 1–serine 20. Positions alanine 21–arginine 48 are excised as a propeptide. The 47-residue stretch at histidine 49–glycine 95 folds into the Gla domain. Positions 65, 69, 72, and 78 each coordinate Ca(2+). Residues glutamate 65, glutamate 69, and glutamate 72 each carry the 4-carboxyglutamate modification. Cysteines 71 and 77 form a disulfide.

This sequence belongs to the osteocalcin/matrix Gla protein family. In terms of processing, gamma-carboxyglutamate residues are formed by vitamin K dependent carboxylation by GGCX. These residues are essential for the binding of calcium.

Its subcellular location is the secreted. In terms of biological role, the carboxylated form is one of the main organic components of the bone matrix, which constitutes 1-2% of the total bone protein. The carboxylated form binds strongly to apatite and calcium. The chain is Osteocalcin (BGLAP) from Gallus gallus (Chicken).